Reading from the N-terminus, the 434-residue chain is 4-hydroxy-3-methylbut-2-en-1-yl diphosphate synthase (flavodoxin) (434 aa).

Residues 1 to 15 (MQSEAQSPRSSQICS) show a composition bias toward polar residues. The interval 1 to 24 (MQSEAQSPRSSQICSTEPVFGGHQ) is disordered. Positions 322, 325, 368, and 375 each coordinate [4Fe-4S] cluster.

Belongs to the IspG family. [4Fe-4S] cluster is required as a cofactor.

The enzyme catalyses (2E)-4-hydroxy-3-methylbut-2-enyl diphosphate + oxidized [flavodoxin] + H2O + 2 H(+) = 2-C-methyl-D-erythritol 2,4-cyclic diphosphate + reduced [flavodoxin]. The protein operates within isoprenoid biosynthesis; isopentenyl diphosphate biosynthesis via DXP pathway; isopentenyl diphosphate from 1-deoxy-D-xylulose 5-phosphate: step 5/6. In terms of biological role, converts 2C-methyl-D-erythritol 2,4-cyclodiphosphate (ME-2,4cPP) into 1-hydroxy-2-methyl-2-(E)-butenyl 4-diphosphate. The polypeptide is 4-hydroxy-3-methylbut-2-en-1-yl diphosphate synthase (flavodoxin) (Burkholderia ambifaria (strain MC40-6)).